The primary structure comprises 177 residues: ATP synthase subunit delta (177 aa).

It belongs to the ATPase delta chain family. As to quaternary structure, F-type ATPases have 2 components, F(1) - the catalytic core - and F(0) - the membrane proton channel. F(1) has five subunits: alpha(3), beta(3), gamma(1), delta(1), epsilon(1). F(0) has three main subunits: a(1), b(2) and c(10-14). The alpha and beta chains form an alternating ring which encloses part of the gamma chain. F(1) is attached to F(0) by a central stalk formed by the gamma and epsilon chains, while a peripheral stalk is formed by the delta and b chains.

It localises to the cell inner membrane. Functionally, f(1)F(0) ATP synthase produces ATP from ADP in the presence of a proton or sodium gradient. F-type ATPases consist of two structural domains, F(1) containing the extramembraneous catalytic core and F(0) containing the membrane proton channel, linked together by a central stalk and a peripheral stalk. During catalysis, ATP synthesis in the catalytic domain of F(1) is coupled via a rotary mechanism of the central stalk subunits to proton translocation. Its function is as follows. This protein is part of the stalk that links CF(0) to CF(1). It either transmits conformational changes from CF(0) to CF(1) or is implicated in proton conduction. This is ATP synthase subunit delta from Haemophilus influenzae (strain PittGG).